The sequence spans 38 residues: Photosystem II reaction center protein L (38 aa).

The helical transmembrane segment at Ser-17–Phe-37 threads the bilayer.

This sequence belongs to the PsbL family. PSII is composed of 1 copy each of membrane proteins PsbA, PsbB, PsbC, PsbD, PsbE, PsbF, PsbH, PsbI, PsbJ, PsbK, PsbL, PsbM, PsbT, PsbX, PsbY, PsbZ, Psb30/Ycf12, at least 3 peripheral proteins of the oxygen-evolving complex and a large number of cofactors. It forms dimeric complexes.

It is found in the plastid. It localises to the chloroplast thylakoid membrane. Its function is as follows. One of the components of the core complex of photosystem II (PSII). PSII is a light-driven water:plastoquinone oxidoreductase that uses light energy to abstract electrons from H(2)O, generating O(2) and a proton gradient subsequently used for ATP formation. It consists of a core antenna complex that captures photons, and an electron transfer chain that converts photonic excitation into a charge separation. This subunit is found at the monomer-monomer interface and is required for correct PSII assembly and/or dimerization. The polypeptide is Photosystem II reaction center protein L (Cyanidioschyzon merolae (strain NIES-3377 / 10D) (Unicellular red alga)).